Here is a 440-residue protein sequence, read N- to C-terminus: Tryptophan aminotransferase-related protein 2 (440 aa).

The helical transmembrane segment at 7–26 (FLSWRNMLVLSLAINFSLIL) threads the bilayer. Residues Y112, 154–155 (ST), N222, 242–245 (DLAY), 265–268 (TASK), and R276 contribute to the pyridoxal 5'-phosphate site. K268 is modified (N6-(pyridoxal phosphate)lysine).

The protein belongs to the alliinase family. Pyridoxal 5'-phosphate is required as a cofactor. As to expression, expressed in roots, cotyledons and in the apical parts of hypocotyls. In roots, restricted to the provasculature of meristematic regions. Detected on the inner side of the apical hooks.

It localises to the membrane. The enzyme catalyses L-tryptophan + 2-oxoglutarate = indole-3-pyruvate + L-glutamate. It carries out the reaction L-tryptophan + pyruvate = indole-3-pyruvate + L-alanine. It functions in the pathway plant hormone metabolism; auxin biosynthesis. Its activity is regulated as follows. Inhibited by L-kynurenine. In terms of biological role, involved in auxin production. Both TAA1 and TAR2 are required for maintaining proper auxin levels in roots, while TAA1, TAR1 and TAR2 are required for proper embryo patterning. Involved in the maintenance of the root stem cell niches. This is Tryptophan aminotransferase-related protein 2 (TAR2) from Arabidopsis thaliana (Mouse-ear cress).